The primary structure comprises 637 residues: Phospholipase B (637 aa).

A signal peptide spans 1-19 (MSIATATFAFSLFATIAFA). Positions 46–572 (DCPSNVTWIR…DTWCWAGDDN (527 aa)) constitute a PLA2c domain. N-linked (GlcNAc...) asparagine glycosylation is found at asparagine 50, asparagine 56, asparagine 122, asparagine 231, asparagine 246, asparagine 272, asparagine 314, asparagine 343, asparagine 387, asparagine 433, asparagine 481, asparagine 501, asparagine 528, asparagine 553, asparagine 572, asparagine 594, and asparagine 606.

It belongs to the lysophospholipase family. Post-translationally, N-glycosylated.

The protein localises to the secreted. The protein resides in the cell membrane. The catalysed reaction is a 1-acyl-sn-glycero-3-phosphocholine + H2O = sn-glycerol 3-phosphocholine + a fatty acid + H(+). With respect to regulation, inhibited by Fe(3+) ion. In terms of biological role, exhibits phospholipase B (PLB), lysophospholipase (LPL) and lysophospholipase/transacylase (LPTA) activities. This chain is Phospholipase B (PLB1), found in Cryptococcus neoformans var. grubii serotype A (strain H99 / ATCC 208821 / CBS 10515 / FGSC 9487) (Filobasidiella neoformans var. grubii).